The sequence spans 140 residues: Large ribosomal subunit protein bL17 (140 aa).

The segment at 121–140 (AAKGLDSGPTAEANDDDSEE) is disordered.

This sequence belongs to the bacterial ribosomal protein bL17 family. In terms of assembly, part of the 50S ribosomal subunit. Contacts protein L32.

The sequence is that of Large ribosomal subunit protein bL17 from Rhodospirillum rubrum (strain ATCC 11170 / ATH 1.1.1 / DSM 467 / LMG 4362 / NCIMB 8255 / S1).